The primary structure comprises 303 residues: Aquaporin-7 (303 aa).

Residues 1 to 21 (MAPRSVLETIQSVLQKNMVRE) lie on the Cytoplasmic side of the membrane. Residue Ser-5 is modified to Phosphoserine. Residues 22–39 (FLAEFLSTYVMMVFGLGS) traverse the membrane as a helical segment. At 40–52 (VAHMVLGENSGSY) the chain is on the extracellular side. The helical transmembrane segment at 53–70 (LGVNLGFGFGVTMGVHVA) threads the bilayer. The Cytoplasmic segment spans residues 71 to 74 (GGIS). An intramembrane region (discontinuously helical) is located at residues 75–88 (GAHMNAAVTFTNCA). Residues 79-81 (NAA) carry the NPA 1 motif. The Cytoplasmic segment spans residues 89–96 (LGRMTWKK). Residues 97-117 (FPVYVLGQFLGSFSAAATTYL) form a helical membrane-spanning segment. At 118–152 (IFYGAINHFAGGDLLVTGSKATANIFATYLPEYMT) the chain is on the extracellular side. A helical transmembrane segment spans residues 153–173 (LWRGFLDEAFVTGMLQLCLFA). The Cytoplasmic portion of the chain corresponds to 174-185 (ITDKKNSPALQG). Residues 186-202 (TEPLVIGILVTVLGVSL) traverse the membrane as a helical segment. Residues 203-206 (GMNS) are Extracellular-facing. Residues 207 to 220 (GYAINPSRDLPPRL) constitute an intramembrane region (discontinuously helical). The NPA 2 motif lies at 211–213 (NPS). The Extracellular portion of the chain corresponds to 221 to 238 (FTFIAGWGKQVFRAGNNW). The helical transmembrane segment at 239–260 (WWVPVVAPLLGAYLGGIVYLGL) threads the bilayer. Residues 261 to 303 (IHPSIPQDPQRLENFTARDQKVTASYKNAASANISGSVPLEHF) are Cytoplasmic-facing.

Belongs to the MIP/aquaporin (TC 1.A.8) family. In terms of assembly, homotetramer; each monomer provides an independent glycerol/water pore. Two homotetramers on opposing membranes can dimerize, forming a cell-cell junction. Interacts with PLIN1. Phosphorylation by PKA could prevent the interaction with PLIN1. As to expression, detected in proximal tubules in kidney. Detected in the capillary network between muscle fibers in skeletal muscle and heart, and in spermatids and on spermatozoa tails in testis and epididymis. Detected in white and brown adipose tissue, especially on small blood vessels (at protein level). Detected in kidney and white adipose tissue.

The protein localises to the cell membrane. The protein resides in the cytoplasmic vesicle membrane. It localises to the lipid droplet. It catalyses the reaction glycerol(in) = glycerol(out). The catalysed reaction is H2O(in) = H2O(out). The enzyme catalyses urea(in) = urea(out). With respect to regulation, glycerol transport is regulated by pH, with the porin being permeable to glycerol at pH 7.4 but not at pH 5.5. Water permeability, however, is not influenced by pH. In terms of biological role, aquaglyceroporins form homotetrameric transmembrane channels, with each monomer independently mediating glycerol and water transport across the plasma membrane along their osmotic gradient. Could also be permeable to urea. Mediates the efflux of glycerol, formed upon triglyceride hydrolysis, to avoid its accumulation in adipocytes and to make it available to other tissues. In the kidney, mediates the reabsorption of glycerol, preventing its loss in urine, again participating to energy homeostasis. In pancreatic beta cells, it also mediates the efflux of glycerol, regulating its intracellular levels. The polypeptide is Aquaporin-7 (Mus musculus (Mouse)).